A 508-amino-acid polypeptide reads, in one-letter code: UBX domain-containing protein 4 (508 aa).

The segment at 1–200 (MLWFQGAIPA…PAEDLNIRVE (200 aa)) is interaction with UBQLN1. The Cytoplasmic segment spans residues 1–413 (MLWFQGAIPA…VHSSSGDIWT (413 aa)). 2 stretches are compositionally biased toward polar residues: residues 117 to 151 (SETS…QSRN) and 160 to 187 (TSDT…SGCS). The tract at residues 117–196 (SETSVANGSQ…SDQRPAEDLN (80 aa)) is disordered. The region spanning 315–393 (ERSTVARIQF…ELAPSASVVV (79 aa)) is the UBX domain. Residues 414–434 (LLGTVLYPFLAIWRLISNFLF) lie within the membrane without spanning it. The Cytoplasmic segment spans residues 435-508 (SNPPPTQTSV…TWNGNSTQQM (74 aa)). The disordered stretch occupies residues 440–508 (TQTSVRVTSS…TWNGNSTQQM (69 aa)). A compositionally biased stretch (polar residues) spans 441-458 (QTSVRVTSSEPPNPASSS). Residues 459 to 491 (KSEKREPVRKRVLEKRGDDFKKEGKIYRLRTQD) show a composition bias toward basic and acidic residues. Thr-489 is modified (phosphothreonine). Over residues 498–508 (NTWNGNSTQQM) the composition is skewed to polar residues.

Directly interacts with VCP. Interacts with UBQLN1. Forms a complex with VCP and UBQLN1.

The protein localises to the endoplasmic reticulum membrane. It is found in the nucleus envelope. In terms of biological role, involved in endoplasmic reticulum-associated protein degradation (ERAD). Acts as a platform to recruit both UBQLN1 and VCP to the ER during ERAD. This chain is UBX domain-containing protein 4 (UBXN4), found in Pongo abelii (Sumatran orangutan).